A 102-amino-acid polypeptide reads, in one-letter code: CRISPR-associated endoribonuclease Cas2 (102 aa).

Position 8 (Asp-8) interacts with Mg(2+).

This sequence belongs to the CRISPR-associated endoribonuclease Cas2 protein family. Homodimer, forms a heterotetramer with a Cas1 homodimer. Requires Mg(2+) as cofactor.

Its function is as follows. CRISPR (clustered regularly interspaced short palindromic repeat), is an adaptive immune system that provides protection against mobile genetic elements (viruses, transposable elements and conjugative plasmids). CRISPR clusters contain sequences complementary to antecedent mobile elements and target invading nucleic acids. CRISPR clusters are transcribed and processed into CRISPR RNA (crRNA). Functions as a ssRNA-specific endoribonuclease. Involved in the integration of spacer DNA into the CRISPR cassette. The sequence is that of CRISPR-associated endoribonuclease Cas2 from Acidovorax ebreus (strain TPSY) (Diaphorobacter sp. (strain TPSY)).